A 143-amino-acid polypeptide reads, in one-letter code: Nucleoside diphosphate kinase (143 aa).

6 residues coordinate ATP: lysine 11, phenylalanine 59, arginine 87, threonine 93, arginine 104, and asparagine 114. The active-site Pros-phosphohistidine intermediate is histidine 117.

Belongs to the NDK family. Homotetramer. The cofactor is Mg(2+).

The protein resides in the cytoplasm. It catalyses the reaction a 2'-deoxyribonucleoside 5'-diphosphate + ATP = a 2'-deoxyribonucleoside 5'-triphosphate + ADP. The enzyme catalyses a ribonucleoside 5'-diphosphate + ATP = a ribonucleoside 5'-triphosphate + ADP. Major role in the synthesis of nucleoside triphosphates other than ATP. The ATP gamma phosphate is transferred to the NDP beta phosphate via a ping-pong mechanism, using a phosphorylated active-site intermediate. This Tolumonas auensis (strain DSM 9187 / NBRC 110442 / TA 4) protein is Nucleoside diphosphate kinase.